Reading from the N-terminus, the 1107-residue chain is MSKTLKKKKHWLSKVQECGLSGVGGDPCSLLEIRGGAEHGEFPYLGRQREDVASFIVGKVPSQGDVLLEVNGTPVSGLTHRDTLAVIRHFREPIRLKTVKPGKVINKDLRHYLSLQFQKGSIDHKLQQVIRDNLYLRTIPCTTRSPRDGEVPGVDYNFISVEQFKALEDSGVLLESGTYDGNFYGTPKPPAEPNPFQADPVDQVLFDGEFDTETQRKRTTSVSKMQRTDSSLPEEEDEEEREAVNGSSGSTDHRDRQEPSEWGKTVPSYNQTNSSMDFRNYLTRDENLEPLPKNWEMAYTEAGMIYFIDHNTKTTTWLDPRLCKKAKAPEDCEDGELPYGWEKIEDPQYGTYYVDHINQKTQFDNPVLEAKRKKQLNPAPSEGTVHQEPENSQFTRDPSQLKGALLHTSLKKSAMGFGFTIIGGDRPDEFLQVKNVLKDGPAAQDGKIAPGDVIVDINGTCVLGHTHAEVVQMFQLIPINQYVNMTLCRGYPLPEDSDDPVADIVNTVPPIINGQMLTQGDINMGSQELKSGVIDLDQRGKPGLMVVNGRLNGPSLDIQDQRTSMASSGNSLPELVTIPLLKGPKGFGFAIADSPMGQKVKMILDSQWCPGLQKGDVIKEICHQNVQNLTHIQVVEVLKQFPVGAEVPLLILRGGPPSPSKVTKVKSDKQELMGSIEAIAPGEPLPQPLPFPPNLARSCSPKLDPSEVYKKSKNIFEDKPPNTKDLDVFLRKQESGFGFRVLGGDGPDQAIYIGAIIPLGAAEKDGRLRAADELICIDGVPVKGKSHKQVLDLMTNAARNGHVLLTVRRQIYYTDKQQEEEELQHTPPAHNGSPRLNRIEVSAIPKLPAEAYDVILQRKDNEGFGFVILTSKNKPPPGVIPHKIGRVIEGSPADRCRKLKVGDRISAVNGQSIVELSHDNIVQLIKDAGNTVTLTVIAEEEHRGPPSGSNSARQSPAPQHRPMGQTQPTYGTLDRYSWSDHKADCGPALPAGSWQALSVGCYPVELERGPRGFGFSLRGGKEYNMGLFILRLAEDGPAIKDGRIHVGDQIVEINNEPTQGITHTRAIELIQAGGSKVLLLLRPGTGLIPDYSLAPSSLCSYVKPDQQ.

Positions 17–102 (ECGLSGVGGD…PIRLKTVKPG (86 aa)) constitute a PDZ 1 domain. The region spanning 110–284 (RHYLSLQFQK…SMDFRNYLTR (175 aa)) is the Guanylate kinase-like domain. 117 to 124 (FQKGSIDH) contacts ATP. The tract at residues 210-277 (FDTETQRKRT…SYNQTNSSMD (68 aa)) is disordered. Residues 220–231 (TSVSKMQRTDSS) show a composition bias toward polar residues. The span at 232–241 (LPEEEDEEER) shows a compositional bias: acidic residues. The span at 251 to 261 (TDHRDRQEPSE) shows a compositional bias: basic and acidic residues. The span at 267–277 (PSYNQTNSSMD) shows a compositional bias: polar residues. WW domains follow at residues 289–322 (EPLPKNWEMAYTEAGMIYFIDHNTKTTTWLDPRL) and 335–368 (GELPYGWEKIEDPQYGTYYVDHINQKTQFDNPVL). The disordered stretch occupies residues 374-398 (KQLNPAPSEGTVHQEPENSQFTRDP). 4 PDZ domains span residues 407–489 (HTSL…TLCR), 577–653 (TIPL…LILR), 727–809 (DVFL…TVRR), and 853–940 (DVIL…IAEE). Residues 941-975 (EHRGPPSGSNSARQSPAPQHRPMGQTQPTYGTLDR) are disordered. Residues 947–957 (SGSNSARQSPA) are compositionally biased toward polar residues. The PDZ 6 domain occupies 1003–1085 (PVELERGPRG…KVLLLLRPGT (83 aa)).

Belongs to the MAGUK family.

It is found in the cell membrane. The protein localises to the cell junction. It localises to the tight junction. In terms of biological role, acts as a scaffolding protein at cell-cell junctions, thereby regulating various cellular and signaling processes. The polypeptide is Membrane-associated guanylate kinase, WW and PDZ domain-containing protein 3 (magi3) (Xenopus tropicalis (Western clawed frog)).